The following is a 482-amino-acid chain: tRNA sulfurtransferase (482 aa).

The region spanning 61–165 (LAIRDALTRI…DDRLLLIKGR (105 aa)) is the THUMP domain. ATP contacts are provided by residues 183-184 (LI), K265, G287, and Q296. Cysteines 344 and 456 form a disulfide. The region spanning 404 to 482 (FGANDVILDI…GFANVKVYRP (79 aa)) is the Rhodanese domain. C456 (cysteine persulfide intermediate) is an active-site residue.

It belongs to the ThiI family.

Its subcellular location is the cytoplasm. It catalyses the reaction [ThiI sulfur-carrier protein]-S-sulfanyl-L-cysteine + a uridine in tRNA + 2 reduced [2Fe-2S]-[ferredoxin] + ATP + H(+) = [ThiI sulfur-carrier protein]-L-cysteine + a 4-thiouridine in tRNA + 2 oxidized [2Fe-2S]-[ferredoxin] + AMP + diphosphate. The catalysed reaction is [ThiS sulfur-carrier protein]-C-terminal Gly-Gly-AMP + S-sulfanyl-L-cysteinyl-[cysteine desulfurase] + AH2 = [ThiS sulfur-carrier protein]-C-terminal-Gly-aminoethanethioate + L-cysteinyl-[cysteine desulfurase] + A + AMP + 2 H(+). It participates in cofactor biosynthesis; thiamine diphosphate biosynthesis. In terms of biological role, catalyzes the ATP-dependent transfer of a sulfur to tRNA to produce 4-thiouridine in position 8 of tRNAs, which functions as a near-UV photosensor. Also catalyzes the transfer of sulfur to the sulfur carrier protein ThiS, forming ThiS-thiocarboxylate. This is a step in the synthesis of thiazole, in the thiamine biosynthesis pathway. The sulfur is donated as persulfide by IscS. The polypeptide is tRNA sulfurtransferase (Salmonella agona (strain SL483)).